Reading from the N-terminus, the 634-residue chain is Frizzled and smoothened-like protein D (634 aa).

The N-terminal stretch at 1–21 (MINKFKFYLIFLKLILILVNC) is a signal peptide. The Extracellular portion of the chain corresponds to 22–257 (QNSLNDYGFG…QMDSVINMSK (236 aa)). The region spanning 34–178 (DESSICTSYI…LTKYGYTANG (145 aa)) is the FZ domain. N-linked (GlcNAc...) asparagine glycosylation is found at Asn-126, Asn-168, Asn-215, Asn-243, and Asn-254. The chain crosses the membrane as a helical span at residues 258–278 (AMSSISFVLSLFNVITFGLLI). Over 279–287 (KKKSKYNVC) the chain is Cytoplasmic. A helical transmembrane segment spans residues 288–308 (IALMAIGSSFIYLSDIINYGV). The Extracellular portion of the chain corresponds to 309–335 (GIEKQLCPEPGRVATQRVDSLCGFTGS). Residues 336–356 (IFHIGITLCVLWSMTMGIVLY) form a helical membrane-spanning segment. At 357-368 (SKIKQFKLPNFR) the chain is on the cytoplasmic side. The helical transmembrane segment at 369–389 (YFLIGNLSFTVVTLIILASAK) threads the bilayer. Topologically, residues 390–410 (KFQGGNGFLECWMRDRWYVVA) are extracellular. Residues 411 to 431 (IFWIPCGIALLLGVLSICGVI) form a helical membrane-spanning segment. At 432 to 454 (FEIYKISKNVSLKDSKVVIRELK) the chain is on the cytoplasmic side. A helical transmembrane segment spans residues 455–475 (PFVLVVTVSASLIYLFVFYFD). At 476-513 (SESKYDFYKKGVEDYILCLLTSENPLDECYTVGPNFNS) the chain is on the extracellular side. A helical transmembrane segment spans residues 514–534 (YFMFYFLIRFFGILFFGIFGT). The Cytoplasmic segment spans residues 535–634 (SEIARNAWTE…MEIELDSIDI (100 aa)). The segment at 560–624 (VSSSTRGGGG…NNNNNDNNNK (65 aa)) is disordered. Low complexity-rich tracts occupy residues 572 to 592 (SGIKSSSSSSNSGVCNNNNST) and 609 to 622 (DNTIITNNNNNDNN).

Belongs to the G-protein coupled receptor Fz/Smo family.

The protein resides in the membrane. This chain is Frizzled and smoothened-like protein D (fslD), found in Dictyostelium discoideum (Social amoeba).